The sequence spans 352 residues: Uricase (352 aa).

The segment at 1–32 is disordered; sequence MFATPLRQPAAANHQTPKNSAGMDEHGKPYQY. Residues 23–32 show a composition bias toward basic and acidic residues; the sequence is MDEHGKPYQY. Residues Lys-41 and Thr-86 each act as charge relay system in the active site. 7 residues coordinate urate: Thr-86, Asp-87, Phe-214, Arg-231, Val-279, Gln-280, and Asn-306. His-308 acts as the Charge relay system in catalysis. A Microbody targeting signal motif is present at residues 350 to 352; it reads SHL.

Belongs to the uricase family. As to expression, malpighian tubules.

It localises to the peroxisome. It catalyses the reaction urate + O2 + H2O = 5-hydroxyisourate + H2O2. Its pathway is purine metabolism; urate degradation; (S)-allantoin from urate: step 1/3. With respect to regulation, repressed by 20-hydroxyecdysone. Its function is as follows. Catalyzes the oxidation of uric acid to 5-hydroxyisourate, which is further processed to form (S)-allantoin. The sequence is that of Uricase (Uro) from Drosophila melanogaster (Fruit fly).